The sequence spans 156 residues: Ribosomal RNA large subunit methyltransferase H (156 aa).

Residues L73, G104, and 123 to 128 (LSALTL) each bind S-adenosyl-L-methionine.

The protein belongs to the RNA methyltransferase RlmH family. Homodimer.

The protein localises to the cytoplasm. It catalyses the reaction pseudouridine(1915) in 23S rRNA + S-adenosyl-L-methionine = N(3)-methylpseudouridine(1915) in 23S rRNA + S-adenosyl-L-homocysteine + H(+). In terms of biological role, specifically methylates the pseudouridine at position 1915 (m3Psi1915) in 23S rRNA. This is Ribosomal RNA large subunit methyltransferase H from Psychromonas ingrahamii (strain DSM 17664 / CCUG 51855 / 37).